Consider the following 393-residue polypeptide: NAD(P)H-quinone oxidoreductase subunit H, chloroplastic (393 aa).

The protein belongs to the complex I 49 kDa subunit family. NDH is composed of at least 16 different subunits, 5 of which are encoded in the nucleus.

The protein localises to the plastid. It localises to the chloroplast thylakoid membrane. The catalysed reaction is a plastoquinone + NADH + (n+1) H(+)(in) = a plastoquinol + NAD(+) + n H(+)(out). The enzyme catalyses a plastoquinone + NADPH + (n+1) H(+)(in) = a plastoquinol + NADP(+) + n H(+)(out). Its function is as follows. NDH shuttles electrons from NAD(P)H:plastoquinone, via FMN and iron-sulfur (Fe-S) centers, to quinones in the photosynthetic chain and possibly in a chloroplast respiratory chain. The immediate electron acceptor for the enzyme in this species is believed to be plastoquinone. Couples the redox reaction to proton translocation, and thus conserves the redox energy in a proton gradient. The polypeptide is NAD(P)H-quinone oxidoreductase subunit H, chloroplastic (Anthoceros angustus (Hornwort)).